The sequence spans 237 residues: MTTSYLTFLAVAVGPPLVALGVVRAARWDGDRARAAGVGILLALALSYTTPWDNYLIATGVWWYGEGTVVGRLWQMPIEEYLFVITQTLLTGLWVQALPLRPTAGFSPTRRDAVLGALAGVLVGCGGAVLLTVDATFYIGAIIAWAAPVLALQWAVGWRYLWRRRRVFAAAVLVPTLFLSAADRYAIADGIWILAGQYTTGITVLGLPIEEGAFFFVTNVFVSQGLILYAWVLARWR.

Helical transmembrane passes span 3–23 (TSYL…LGVV), 38–58 (VGIL…YLIA), 80–100 (EYLF…ALPL), 113–133 (AVLG…LLTV), 137–157 (FYIG…WAVG), 170–192 (AAVL…DGIW), and 213–233 (AFFF…AWVL).

It belongs to the lycopene beta-cyclase family.

Its subcellular location is the cell membrane. It catalyses the reaction a carotenoid psi-end group = a carotenoid beta-end derivative. It carries out the reaction all-trans-lycopene = gamma-carotene. The catalysed reaction is gamma-carotene = all-trans-beta-carotene. It functions in the pathway carotenoid biosynthesis; beta-carotene biosynthesis. Catalyzes the cyclization of both ends of lycopene to form beta-carotene, a retinal precursor. Is required for bacteriorhodopsin biogenesis, a light-driven proton pump with a covalently bound retinal cofactor. This chain is Lycopene beta-cyclase, found in Halobacterium salinarum (strain ATCC 29341 / DSM 671 / R1).